We begin with the raw amino-acid sequence, 151 residues long: NADPH-dependent 7-cyano-7-deazaguanine reductase (151 aa).

Catalysis depends on Cys-49, which acts as the Thioimide intermediate. The active-site Proton donor is the Asp-56. Substrate-binding positions include 71–73 and 90–91; these read IES and HE.

It belongs to the GTP cyclohydrolase I family. QueF type 1 subfamily.

It is found in the cytoplasm. It catalyses the reaction 7-aminomethyl-7-carbaguanine + 2 NADP(+) = 7-cyano-7-deazaguanine + 2 NADPH + 3 H(+). The protein operates within tRNA modification; tRNA-queuosine biosynthesis. Catalyzes the NADPH-dependent reduction of 7-cyano-7-deazaguanine (preQ0) to 7-aminomethyl-7-deazaguanine (preQ1). The polypeptide is NADPH-dependent 7-cyano-7-deazaguanine reductase (Caulobacter vibrioides (strain ATCC 19089 / CIP 103742 / CB 15) (Caulobacter crescentus)).